Consider the following 289-residue polypeptide: Phospholipase A1 (289 aa).

Positions 1–20 (MRTLQGWLLPVFMLPMAVYA) are cleaved as a signal peptide. Over 21–52 (QEATVKEVHDAPAVRGSIIANMLQEHDNPFTL) the chain is Periplasmic. A beta stranded membrane pass occupies residues 53–65 (YPYDTNYLIYTQT). Residues 66–84 (SDLNKEAIASYDWAENARK) lie on the Extracellular side of the membrane. The beta stranded transmembrane segment at 85–99 (DEVKFQLSLAFPLWR) threads the bilayer. At 100 to 105 (GILGPN) the chain is on the periplasmic side. The chain crosses the membrane as a beta stranded span at residues 106–118 (SVLGASYTQKSWW). Topologically, residues 119–128 (QLSNSEESSP) are extracellular. Serine 126 is a Ca(2+) binding site. Residues 129 to 148 (FRETNYEPQLFLGFATDYRF) traverse the membrane as a beta stranded segment. Residues 149–150 (AG) are Periplasmic-facing. The beta stranded transmembrane segment at 151–164 (WTLRDVEMGYNHDS) threads the bilayer. The active-site Proton acceptor is histidine 162. Serine 164 serves as the catalytic Nucleophile. Residues 165–173 (NGRSDPTSR) are Extracellular-facing. The Ca(2+) site is built by arginine 167 and serine 172. Residues 174-186 (SWNRLYTRLMAEN) traverse the membrane as a beta stranded segment. At 187 to 188 (GN) the chain is on the periplasmic side. The beta stranded transmembrane segment at 189 to 198 (WLVEVKPWYV) threads the bilayer. The Extracellular segment spans residues 199–216 (VGNTDDNPDITKYMGYYQ). Aspartate 204 contributes to the Ca(2+) binding site. The beta stranded transmembrane segment at 217–223 (LKIGYHL) threads the bilayer. Topologically, residues 224-225 (GD) are periplasmic. The chain crosses the membrane as a beta stranded span at residues 226-234 (AVLSAKGQY). Over 235–241 (NWNTGYG) the chain is Extracellular. The chain crosses the membrane as a beta stranded span at residues 242-250 (GAELGLSYP). Residues 251–255 (ITKHV) lie on the Periplasmic side of the membrane. The chain crosses the membrane as a beta stranded span at residues 256 to 265 (RLYTQVYSGY). Over 266 to 274 (GESLIDYNF) the chain is Extracellular. A beta stranded transmembrane segment spans residues 275–286 (NQTRVGVGVMLN). The Periplasmic portion of the chain corresponds to 287 to 289 (DLF).

It belongs to the phospholipase A1 family. As to quaternary structure, homodimer; dimerization is reversible, and the dimeric form is the active one. Ca(2+) serves as cofactor.

It is found in the cell outer membrane. It carries out the reaction a 1,2-diacyl-sn-glycero-3-phosphocholine + H2O = a 2-acyl-sn-glycero-3-phosphocholine + a fatty acid + H(+). The catalysed reaction is a 1,2-diacyl-sn-glycero-3-phosphocholine + H2O = a 1-acyl-sn-glycero-3-phosphocholine + a fatty acid + H(+). Hydrolysis of phosphatidylcholine with phospholipase A2 (EC 3.1.1.4) and phospholipase A1 (EC 3.1.1.32) activities. This chain is Phospholipase A1 (pldA), found in Escherichia coli O157:H7.